The primary structure comprises 484 residues: Muscarinic acetylcholine receptor M4 (484 aa).

Residues 1-32 lie on the Extracellular side of the membrane; the sequence is MENDTWENESSASNHSIDETIVEIPGKYQTME. N3, N8, and N14 each carry an N-linked (GlcNAc...) asparagine glycan. Residues 33 to 55 form a helical membrane-spanning segment; sequence MIFIATVTGSLSLVTVVGNILVM. Residues 56–69 lie on the Cytoplasmic side of the membrane; that stretch reads LSIKVNRQLQTVNN. A helical transmembrane segment spans residues 70–90; sequence YFLFSLACADLIIGVFSMNLY. The Extracellular segment spans residues 91-107; it reads SLYIIKGYWPLGPIVCD. Cysteines 106 and 186 form a disulfide. A helical membrane pass occupies residues 108 to 129; it reads LWLALDYVVSNASVMNLLIISL. Over 130 to 149 the chain is Cytoplasmic; that stretch reads ERXFCVTKPLTYPARRTTKM. Residues 150–172 traverse the membrane as a helical segment; it reads AGLMIAAAWLLSFELWAPAILFW. Topologically, residues 173–194 are extracellular; it reads QFIVGQRTVPSGECYIQFLSNP. A helical membrane pass occupies residues 195–217; sequence AVTFGTAIAAFYLPVVIMTILYI. Topologically, residues 218–406 are cytoplasmic; it reads HISLASRSRV…AAREKKVTRT (189 aa). The tract at residues 255-316 is disordered; it reads NIPKQDAGDK…EKQPLSEASS (62 aa). The span at 260–270 shows a compositional bias: basic and acidic residues; that stretch reads DAGDKVVEKKN. Residues 407–427 form a helical membrane-spanning segment; sequence IFAILLAFIITWTPYNVMVLI. The Extracellular segment spans residues 428–441; sequence NTFCQTCIPETIWY. A helical membrane pass occupies residues 442–461; sequence IGYWLCYVNSTINPACYALC. At 462–484 the chain is on the cytoplasmic side; that stretch reads NATFKKTFKHLLMCQYKSIGTAR.

This sequence belongs to the G-protein coupled receptor 1 family. Muscarinic acetylcholine receptor subfamily. CHRM4 sub-subfamily.

Its subcellular location is the cell membrane. It is found in the postsynaptic cell membrane. Its function is as follows. The muscarinic acetylcholine receptor mediates various cellular responses, including inhibition of adenylate cyclase, breakdown of phosphoinositides and modulation of potassium channels through the action of G proteins. Primary transducing effect is inhibition of adenylate cyclase. This is Muscarinic acetylcholine receptor M4 (chrm4) from Xenopus laevis (African clawed frog).